A 198-amino-acid chain; its full sequence is Probable chemoreceptor glutamine deamidase CheD (198 aa).

Belongs to the CheD family.

It catalyses the reaction L-glutaminyl-[protein] + H2O = L-glutamyl-[protein] + NH4(+). Its function is as follows. Probably deamidates glutamine residues to glutamate on methyl-accepting chemotaxis receptors (MCPs), playing an important role in chemotaxis. The polypeptide is Probable chemoreceptor glutamine deamidase CheD (Xanthomonas euvesicatoria pv. vesicatoria (strain 85-10) (Xanthomonas campestris pv. vesicatoria)).